We begin with the raw amino-acid sequence, 102 residues long: NADH-quinone oxidoreductase subunit K (102 aa).

The next 3 membrane-spanning stretches (helical) occupy residues 5 to 25 (IAHY…GIFL), 31 to 51 (IVIL…FVAF), and 66 to 86 (FVLT…VVFF).

It belongs to the complex I subunit 4L family. In terms of assembly, NDH-1 is composed of 14 different subunits. Subunits NuoA, H, J, K, L, M, N constitute the membrane sector of the complex.

Its subcellular location is the cell inner membrane. It catalyses the reaction a quinone + NADH + 5 H(+)(in) = a quinol + NAD(+) + 4 H(+)(out). Its function is as follows. NDH-1 shuttles electrons from NADH, via FMN and iron-sulfur (Fe-S) centers, to quinones in the respiratory chain. The immediate electron acceptor for the enzyme in this species is believed to be ubiquinone. Couples the redox reaction to proton translocation (for every two electrons transferred, four hydrogen ions are translocated across the cytoplasmic membrane), and thus conserves the redox energy in a proton gradient. The protein is NADH-quinone oxidoreductase subunit K of Mesorhizobium japonicum (strain LMG 29417 / CECT 9101 / MAFF 303099) (Mesorhizobium loti (strain MAFF 303099)).